Here is a 271-residue protein sequence, read N- to C-terminus: Energy-coupling factor transporter ATP-binding protein EcfA (271 aa).

The region spanning 2–231 (ISIQNLTFYY…PLFLQQYKLN (230 aa)) is the ABC transporter domain. ATP is bound at residue 34-41 (GHNGSGKS).

It belongs to the ABC transporter superfamily. Energy-coupling factor EcfA family. Forms a stable energy-coupling factor (ECF) transporter complex composed of 2 membrane-embedded substrate-binding proteins (S component), 2 ATP-binding proteins (A component) and 2 transmembrane proteins (T component).

The protein localises to the cell membrane. In terms of biological role, ATP-binding (A) component of a common energy-coupling factor (ECF) ABC-transporter complex. Unlike classic ABC transporters this ECF transporter provides the energy necessary to transport a number of different substrates. In Onion yellows phytoplasma (strain OY-M), this protein is Energy-coupling factor transporter ATP-binding protein EcfA.